The primary structure comprises 396 residues: Elongation factor Tu (396 aa).

The tr-type G domain maps to 10–206; the sequence is KPHCNIGTIG…AVDAYIPQPE (197 aa). The G1 stretch occupies residues 19–26; that stretch reads GHVDHGKT. A GTP-binding site is contributed by 19 to 26; the sequence is GHVDHGKT. Mg(2+) is bound at residue Thr26. Residues 60-64 are G2; that stretch reads GITIS. Residues 81 to 84 form a G3 region; sequence DCPG. GTP-binding positions include 81-85 and 136-139; these read DCPGH and NKVD. The G4 stretch occupies residues 136–139; it reads NKVD. Positions 174-176 are G5; that stretch reads SAL.

It belongs to the TRAFAC class translation factor GTPase superfamily. Classic translation factor GTPase family. EF-Tu/EF-1A subfamily. In terms of assembly, monomer.

It localises to the cytoplasm. The enzyme catalyses GTP + H2O = GDP + phosphate + H(+). GTP hydrolase that promotes the GTP-dependent binding of aminoacyl-tRNA to the A-site of ribosomes during protein biosynthesis. The sequence is that of Elongation factor Tu from Parvibaculum lavamentivorans (strain DS-1 / DSM 13023 / NCIMB 13966).